The primary structure comprises 667 residues: Bifunctional polymyxin resistance protein ArnA (667 aa).

The tract at residues 1-304 is formyltransferase ArnAFT; it reads MKAIVFAYHD…EMGIVTDVRL (304 aa). Histidine 104 functions as the Proton donor; for formyltransferase activity in the catalytic mechanism. (6R)-10-formyltetrahydrofolate contacts are provided by residues arginine 114 and 136-140; that span reads VKKAD. The segment at 314 to 667 is dehydrogenase ArnADH; sequence RRTRVLILGV…TAAPKDELNA (354 aa). Residues aspartate 347 and 368–369 contribute to the NAD(+) site; that span reads DI. UDP-alpha-D-glucuronate is bound by residues alanine 393, tyrosine 398, and 432–433; that span reads TS. The Proton acceptor; for decarboxylase activity role is filled by glutamate 434. Residues arginine 460, asparagine 492, 526–535, and tyrosine 613 contribute to the UDP-alpha-D-glucuronate site; that span reads KLVDGGAQKR. Arginine 619 acts as the Proton donor; for decarboxylase activity in catalysis.

This sequence in the N-terminal section; belongs to the Fmt family. UDP-L-Ara4N formyltransferase subfamily. It in the C-terminal section; belongs to the NAD(P)-dependent epimerase/dehydratase family. UDP-glucuronic acid decarboxylase subfamily. As to quaternary structure, homohexamer, formed by a dimer of trimers.

The catalysed reaction is UDP-alpha-D-glucuronate + NAD(+) = UDP-beta-L-threo-pentopyranos-4-ulose + CO2 + NADH. The enzyme catalyses UDP-4-amino-4-deoxy-beta-L-arabinose + (6R)-10-formyltetrahydrofolate = UDP-4-deoxy-4-formamido-beta-L-arabinose + (6S)-5,6,7,8-tetrahydrofolate + H(+). It participates in nucleotide-sugar biosynthesis; UDP-4-deoxy-4-formamido-beta-L-arabinose biosynthesis; UDP-4-deoxy-4-formamido-beta-L-arabinose from UDP-alpha-D-glucuronate: step 1/3. Its pathway is nucleotide-sugar biosynthesis; UDP-4-deoxy-4-formamido-beta-L-arabinose biosynthesis; UDP-4-deoxy-4-formamido-beta-L-arabinose from UDP-alpha-D-glucuronate: step 3/3. The protein operates within bacterial outer membrane biogenesis; lipopolysaccharide biosynthesis. In terms of biological role, bifunctional enzyme that catalyzes the oxidative decarboxylation of UDP-glucuronic acid (UDP-GlcUA) to UDP-4-keto-arabinose (UDP-Ara4O) and the addition of a formyl group to UDP-4-amino-4-deoxy-L-arabinose (UDP-L-Ara4N) to form UDP-L-4-formamido-arabinose (UDP-L-Ara4FN). The modified arabinose is attached to lipid A and is required for resistance to polymyxin and cationic antimicrobial peptides. The protein is Bifunctional polymyxin resistance protein ArnA of Yersinia pestis bv. Antiqua (strain Antiqua).